The sequence spans 1102 residues: Avirulence protein AvrXa10 (1102 aa).

Disordered stretches follow at residues 1 to 68 (MDPI…SAGS) and 127 to 151 (ARPP…PAAQ). Over residues 130–140 (PRAKPAPRRRA) the composition is skewed to basic residues. The segment covering 141 to 151 (AQPSDASPAAQ) has biased composition (low complexity). Core repeat repeat units lie at residues 288 to 321 (LTPD…QAHG), 322 to 355 (LTPD…QAHG), 356 to 389 (LTPD…QDHG), 390 to 423 (LTPD…QDHG), 424 to 457 (LTPD…QDHG), 458 to 491 (LTPD…QDHG), 492 to 525 (LTPD…QTHG), 526 to 559 (LTPD…QDHG), 560 to 593 (LTPD…QAHG), 594 to 627 (LTPD…QDHG), 628 to 661 (LTPD…QDHG), 662 to 695 (LTPA…QDHG), 696 to 729 (LTPV…QDHG), 730 to 763 (LTPV…QDHG), and 764 to 797 (LTPV…QDHG). One copy of the Core repeat 15.5 repeat lies at 798 to 809 (LTPDQVVAIASN). The short motif at 951–954 (KRVK) is the Nuclear localization sequence A (NLSA) element. The segment covering 978-990 (DLDAPSPMHEGDQ) has biased composition (basic and acidic residues). The interval 978–1021 (DLDAPSPMHEGDQTRASSRKRSRSDRAVTGPSTQQSFEVRVPEQ) is disordered. A Nuclear localization sequence B (NLSB) motif is present at residues 997-1000 (KRSR). Residues 1034-1037 (KRPR) carry the Nuclear localization sequence C (NLSC) motif. Residues 1063-1093 (WEQDAAPFAGAADDFPAFNEEELAWLMELLP) form an activation domain region.

The protein belongs to the transcription activator-like effector (TALE) family.

The protein resides in the secreted. Its subcellular location is the host nucleus. Its function is as follows. Avirulence protein. Induces the hypersensitive response (HR)in rice plants carrying the resistance gene Xa10. Activity depends on the presence of the core repeat domains; replacement with repeat domains from other proteins (AvrBs3 of X.euvesicatoria (AC P14727) or AvrXa7 of this organism) does not elicit the HR. Probably acts as a transcription factor in its host plant (rice) to induce plant resistance or disease. In Xanthomonas oryzae pv. oryzae, this protein is Avirulence protein AvrXa10.